A 260-amino-acid chain; its full sequence is Methionine-rich nacre protein (260 aa).

The N-terminal stretch at 1 to 19 (MRRILCLAVVIFIINDVSS) is a signal peptide. The interval 23–75 (GSNKNWKKSGMSLSSPGNKKPTGNNNAVPQKSKMNNVNQNSLSQPKRPSHPGN) is disordered. Residues 33–68 (MSLSSPGNKKPTGNNNAVPQKSKMNNVNQNSLSQPK) are compositionally biased toward polar residues.

As to expression, expressed in mantle distal zone, mantle margin and grafted pearl pockets. Not expressed in adductor muscle, gills, hemocytes or ungrafted pearl pockets. Within the mantle, specifically expressed in mineralizing outer epithelium cells (at protein level). After secretion incorporated into acid-insoluble nacre matrix of shell and pearl (at protein level). Not found in acid-insoluble matrix of shell prisms (at protein level).

It is found in the secreted. The sequence is that of Methionine-rich nacre protein from Margaritifera margaritifera (Freshwater pearl mussel).